The chain runs to 609 residues: Glutamine--fructose-6-phosphate aminotransferase [isomerizing] (609 aa).

Cysteine 2 serves as the catalytic Nucleophile; for GATase activity. Residues 2–219 (CGIVAAVTQR…EGDIAIVARK (218 aa)) form the Glutamine amidotransferase type-2 domain. SIS domains lie at 288-428 (ENNI…SKKE) and 460-599 (MANT…IDQP). Residue lysine 604 is the For Fru-6P isomerization activity of the active site.

As to quaternary structure, homodimer.

It localises to the cytoplasm. It catalyses the reaction D-fructose 6-phosphate + L-glutamine = D-glucosamine 6-phosphate + L-glutamate. Catalyzes the first step in hexosamine metabolism, converting fructose-6P into glucosamine-6P using glutamine as a nitrogen source. The sequence is that of Glutamine--fructose-6-phosphate aminotransferase [isomerizing] from Buchnera aphidicola subsp. Acyrthosiphon pisum (strain APS) (Acyrthosiphon pisum symbiotic bacterium).